The sequence spans 179 residues: Probable chorismate pyruvate-lyase (179 aa).

Substrate contacts are provided by arginine 82, leucine 120, and glutamate 165.

The protein belongs to the UbiC family.

Its subcellular location is the cytoplasm. The catalysed reaction is chorismate = 4-hydroxybenzoate + pyruvate. It functions in the pathway cofactor biosynthesis; ubiquinone biosynthesis. Functionally, removes the pyruvyl group from chorismate, with concomitant aromatization of the ring, to provide 4-hydroxybenzoate (4HB) for the ubiquinone pathway. This is Probable chorismate pyruvate-lyase from Vibrio parahaemolyticus serotype O3:K6 (strain RIMD 2210633).